A 455-amino-acid chain; its full sequence is Bifunctional protein GlmU (455 aa).

The tract at residues 1–226 (MSLEIVILAA…AMEVQGANDR (226 aa)) is pyrophosphorylase. UDP-N-acetyl-alpha-D-glucosamine contacts are provided by residues 8–11 (LAAG), lysine 22, glutamine 73, 78–79 (GT), 99–101 (YGD), glycine 136, glutamate 151, asparagine 166, and asparagine 224. Aspartate 101 serves as a coordination point for Mg(2+). Residue asparagine 224 participates in Mg(2+) binding. The interval 227–247 (KQLAELERHYQLRAGRRLMAQ) is linker. Residues 248–455 (GVTLRDPARF…WKRPEKIKKD (208 aa)) are N-acetyltransferase. UDP-N-acetyl-alpha-D-glucosamine is bound by residues arginine 330 and lysine 348. The Proton acceptor role is filled by histidine 360. UDP-N-acetyl-alpha-D-glucosamine-binding residues include tyrosine 363 and asparagine 374. Acetyl-CoA is bound by residues alanine 377, 383–384 (NY), serine 402, alanine 420, and arginine 437.

This sequence in the N-terminal section; belongs to the N-acetylglucosamine-1-phosphate uridyltransferase family. In the C-terminal section; belongs to the transferase hexapeptide repeat family. As to quaternary structure, homotrimer. It depends on Mg(2+) as a cofactor.

The protein resides in the cytoplasm. The enzyme catalyses alpha-D-glucosamine 1-phosphate + acetyl-CoA = N-acetyl-alpha-D-glucosamine 1-phosphate + CoA + H(+). It carries out the reaction N-acetyl-alpha-D-glucosamine 1-phosphate + UTP + H(+) = UDP-N-acetyl-alpha-D-glucosamine + diphosphate. It functions in the pathway nucleotide-sugar biosynthesis; UDP-N-acetyl-alpha-D-glucosamine biosynthesis; N-acetyl-alpha-D-glucosamine 1-phosphate from alpha-D-glucosamine 6-phosphate (route II): step 2/2. Its pathway is nucleotide-sugar biosynthesis; UDP-N-acetyl-alpha-D-glucosamine biosynthesis; UDP-N-acetyl-alpha-D-glucosamine from N-acetyl-alpha-D-glucosamine 1-phosphate: step 1/1. The protein operates within bacterial outer membrane biogenesis; LPS lipid A biosynthesis. Functionally, catalyzes the last two sequential reactions in the de novo biosynthetic pathway for UDP-N-acetylglucosamine (UDP-GlcNAc). The C-terminal domain catalyzes the transfer of acetyl group from acetyl coenzyme A to glucosamine-1-phosphate (GlcN-1-P) to produce N-acetylglucosamine-1-phosphate (GlcNAc-1-P), which is converted into UDP-GlcNAc by the transfer of uridine 5-monophosphate (from uridine 5-triphosphate), a reaction catalyzed by the N-terminal domain. The protein is Bifunctional protein GlmU of Pseudomonas fluorescens (strain ATCC BAA-477 / NRRL B-23932 / Pf-5).